The chain runs to 157 residues: Small ribosomal subunit protein uS7 (157 aa).

The protein belongs to the universal ribosomal protein uS7 family. In terms of assembly, part of the 30S ribosomal subunit. Contacts proteins S9 and S11.

In terms of biological role, one of the primary rRNA binding proteins, it binds directly to 16S rRNA where it nucleates assembly of the head domain of the 30S subunit. Is located at the subunit interface close to the decoding center, probably blocks exit of the E-site tRNA. This chain is Small ribosomal subunit protein uS7, found in Borreliella burgdorferi (strain ATCC 35210 / DSM 4680 / CIP 102532 / B31) (Borrelia burgdorferi).